Reading from the N-terminus, the 36-residue chain is Conotoxin Cl14.10 (36 aa).

Residues 1–2 (NE) constitute a propeptide that is removed on maturation.

Post-translationally, contains 2 disulfide bond. Expressed by the venom duct.

The protein localises to the secreted. This Californiconus californicus (California cone) protein is Conotoxin Cl14.10.